We begin with the raw amino-acid sequence, 358 residues long: uncharacterized protein (358 aa).

This sequence belongs to the serpin family. Poxviruses subfamily.

This is an uncharacterized protein from Fowlpox virus (strain NVSL) (FPV).